Consider the following 338-residue polypeptide: Electron transfer flavoprotein subunit alpha (338 aa).

275–303 provides a ligand contact to FAD; it reads IYIACAISGAIQPLAGMTGSDCIIAINKD.

This sequence belongs to the ETF alpha-subunit/FixB family. Heterodimer of an alpha and a beta subunit. Requires FAD as cofactor.

In terms of biological role, the electron transfer flavoprotein serves as a specific electron acceptor for other dehydrogenases. It transfers the electrons to the main respiratory chain via ETF-ubiquinone oxidoreductase (ETF dehydrogenase). This chain is Electron transfer flavoprotein subunit alpha (etfA), found in Megasphaera elsdenii.